The primary structure comprises 359 residues: Phosphoserine aminotransferase (359 aa).

L-glutamate is bound at residue Arg41. Residues 75 to 76 (AS), Trp101, Thr152, Asp171, and Gln194 each bind pyridoxal 5'-phosphate. Position 195 is an N6-(pyridoxal phosphate)lysine (Lys195). Pyridoxal 5'-phosphate is bound at residue 236–237 (NT).

Belongs to the class-V pyridoxal-phosphate-dependent aminotransferase family. SerC subfamily. As to quaternary structure, homodimer. Requires pyridoxal 5'-phosphate as cofactor.

Its subcellular location is the cytoplasm. It catalyses the reaction O-phospho-L-serine + 2-oxoglutarate = 3-phosphooxypyruvate + L-glutamate. The catalysed reaction is 4-(phosphooxy)-L-threonine + 2-oxoglutarate = (R)-3-hydroxy-2-oxo-4-phosphooxybutanoate + L-glutamate. It functions in the pathway amino-acid biosynthesis; L-serine biosynthesis; L-serine from 3-phospho-D-glycerate: step 2/3. Its pathway is cofactor biosynthesis; pyridoxine 5'-phosphate biosynthesis; pyridoxine 5'-phosphate from D-erythrose 4-phosphate: step 3/5. Functionally, catalyzes the reversible conversion of 3-phosphohydroxypyruvate to phosphoserine and of 3-hydroxy-2-oxo-4-phosphonooxybutanoate to phosphohydroxythreonine. This chain is Phosphoserine aminotransferase, found in Acinetobacter baumannii (strain ACICU).